The primary structure comprises 950 residues: Voltage-gated inwardly rectifying potassium channel KCNH6 (950 aa).

At 1-261 (MPVRRGHVAP…YSPFKAVWDW (261 aa)) the chain is on the cytoplasmic side. In terms of domain architecture, PAS spans 41–70 (IIYCNDGFCELFGYSRVEVMQRPCTCDFLT). The region spanning 92-144 (CKVDILYYRKDASSFRCLVDVVPVKNEDGAVIMFILNFEDLAQLLAKSSSRSL) is the PAC domain. Residues 154-174 (LGSEGSHSRPSGQGPGPGRGK) are disordered. A helical membrane pass occupies residues 262–282 (LILLLVIYTAVFTPYSAAFLL). At 283 to 298 (SDQDESQRGTCGYTCS) the chain is on the extracellular side. A helical transmembrane segment spans residues 299–319 (PLTVVDLIVDIMFVVDIVINF). Over 320 to 340 (RTTYVNTNDEVVSHPRRIAVH) the chain is Cytoplasmic. A helical transmembrane segment spans residues 341–361 (YFKGWFLIDMVAAIPFDLLIF). Residues 362 to 370 (RTGSDETTT) are Extracellular-facing. Residues 371–391 (LIGLLKTARLLRLVRVARKLD) traverse the membrane as a helical; Voltage-sensor segment. Residues 392–398 (RYSEYGA) lie on the Cytoplasmic side of the membrane. The chain crosses the membrane as a helical span at residues 399 to 419 (AVLFLLMCTFALIAHWLACIW). The Extracellular portion of the chain corresponds to 420–463 (YAIGNVERPYLEPKIGWLDSLGAQLGKQYNGSDPASGPSVQDKY). An intramembrane region (pore-forming) is located at residues 464 to 484 (VTALYFTFSSLTSVGFGNVSP). The Selectivity filter motif lies at 476–481 (SVGFGN). Residues 485-490 (NTNSEK) lie on the Extracellular side of the membrane. A helical membrane pass occupies residues 491 to 511 (VFSICVMLIGSLMYASIFGNV). The Cytoplasmic segment spans residues 512–950 (SAIIQRLYSG…HGSDPGFTRS (439 aa)). The cNMP-binding domain stretch occupies residues 594–694 (AFRGASKGCL…IHRADLLEVL (101 aa)). 2 disordered regions span residues 719–750 (GGLQ…APSL) and 890–950 (VPSS…FTRS). Residues 740–750 (NDSQSGAAPSL) are compositionally biased toward polar residues. Positions 898–912 (PGGLLSPLASPLRPL) are enriched in low complexity.

This sequence belongs to the potassium channel family. H (Eag) (TC 1.A.1.20) subfamily. Kv11.2/KCNH6 sub-subfamily. In terms of assembly, the potassium channel is probably composed of a homo- or heterotetrameric complex of pore-forming alpha subunits that can associate only within their subfamily. In terms of tissue distribution, highly expressed in celiac and superior mesenteric ganglia, but not detected in brain or in heart. Detected at low levels in retina. Also found in pituitary. Also found in the olfactory bulb (granular and mitral cell layers).

It localises to the cell membrane. The catalysed reaction is K(+)(in) = K(+)(out). Functionally, pore-forming (alpha) subunit of voltage-gated inwardly rectifying potassium channel. Characterized by unusual gating kinetics by producing relatively small outward currents during membrane depolarization and large inward currents during subsequent repolarization which reflect a rapid inactivation during depolarization and quick recovery from inactivation but slow deactivation (closing) during repolarization. Activates even more slowly than KCNH2. The chain is Voltage-gated inwardly rectifying potassium channel KCNH6 from Rattus norvegicus (Rat).